The primary structure comprises 595 residues: GPI mannosyltransferase 3 (595 aa).

The next 10 membrane-spanning stretches (helical) occupy residues 58–78 (YAFP…GVAT), 85–105 (LAHA…GVAA), 128–148 (GPRV…VLLV), 185–207 (FFAT…LYHW), 212–232 (GLDV…FACL), 235–255 (PTNV…LVRS), 260–280 (LLLT…CANI), 289–309 (GVLL…LAAF), 319–339 (LLQS…GALL), and 413–433 (VQSL…VLNT).

This sequence belongs to the glycosyltransferase 22 family. PIGB subfamily.

The protein localises to the endoplasmic reticulum membrane. It participates in glycolipid biosynthesis; glycosylphosphatidylinositol-anchor biosynthesis. Mannosyltransferase involved in glycosylphosphatidylinositol-anchor biosynthesis. Transfers the third mannose to Man2-GlcN-acyl-PI during GPI precursor assembly. This is GPI mannosyltransferase 3 (GPI10) from Eremothecium gossypii (strain ATCC 10895 / CBS 109.51 / FGSC 9923 / NRRL Y-1056) (Yeast).